A 464-amino-acid chain; its full sequence is DNA primase DnaG (464 aa).

A Toprim domain is found at 200-274 (DSIIVVEGRA…DVDYVARAPE (75 aa)). Positions 206, 248, and 250 each coordinate Mg(2+). Positions 322-332 (NGREEKVREVK) are enriched in basic and acidic residues. The interval 322–359 (NGREEKVREVKPPAPAPAPAPAPKPIEKPEPKEREEKI) is disordered. A compositionally biased stretch (pro residues) spans 333 to 345 (PPAPAPAPAPAPK). Over residues 346–359 (PIEKPEPKEREEKI) the composition is skewed to basic and acidic residues.

It belongs to the archaeal DnaG primase family. Forms a ternary complex with MCM helicase and DNA. Component of the archaeal exosome complex. Mg(2+) serves as cofactor.

It carries out the reaction ssDNA + n NTP = ssDNA/pppN(pN)n-1 hybrid + (n-1) diphosphate.. In terms of biological role, RNA polymerase that catalyzes the synthesis of short RNA molecules used as primers for DNA polymerase during DNA replication. Also part of the exosome, which is a complex involved in RNA degradation. Acts as a poly(A)-binding protein that enhances the interaction between heteromeric, adenine-rich transcripts and the exosome. This Thermococcus onnurineus (strain NA1) protein is DNA primase DnaG.